The chain runs to 200 residues: Recombination protein RecR (200 aa).

The C4-type zinc-finger motif lies at 58-75 (CPLCFTLKESKEADCHFC). Residues 82–177 (QSLCIVASPK…NISRLALGLP (96 aa)) enclose the Toprim domain.

This sequence belongs to the RecR family.

Its function is as follows. May play a role in DNA repair. It seems to be involved in an RecBC-independent recombinational process of DNA repair. It may act with RecF and RecO. In Chlamydia pneumoniae (Chlamydophila pneumoniae), this protein is Recombination protein RecR.